We begin with the raw amino-acid sequence, 268 residues long: Zwei Ig domain protein zig-8 (268 aa).

Residues 1–21 (MRRFSNICVILFSFLYATGHG) form the signal peptide. 2 Ig-like C2-type domains span residues 40–128 (PSQT…NTVY) and 140–251 (PSPS…NSAT). A disulfide bridge connects residues Cys57 and Cys118. N-linked (GlcNAc...) asparagine glycans are attached at residues Asn82, Asn155, Asn164, and Asn191. Cys165 and Cys226 are oxidised to a cystine.

In terms of tissue distribution, expressed in PVT neurons and pharyngeal muscles.

The protein resides in the secreted. Functionally, together with zig-5, required postembryonically to maintain the position of ASI and ASH head neuron cell bodies and ventral nerve cord axons of PVQ, PVP and HSN neurons by preventing their displacement that could occur during body growth and movement. May act by reducing L1CAM-like protein sax-7 (long isoform) adhesion. In Caenorhabditis elegans, this protein is Zwei Ig domain protein zig-8.